The following is a 425-amino-acid chain: Polyribonucleotide 5'-hydroxyl-kinase Clp1 (425 aa).

Residues glutamate 22, lysine 62, and 124 to 129 (DVGKST) contribute to the ATP site.

This sequence belongs to the Clp1 family. Clp1 subfamily. In terms of assembly, component of the tRNA splicing endonuclease complex, composed of CLP1, TSEN2, TSEN15, TSEN34 and TSEN54. Component of pre-mRNA cleavage complex II (CF-II). Also associates with numerous components of the pre-mRNA cleavage complex I (CF-I/CFIm), including NUDT21, CPSF2, CPSF3, CPSF6 and CPSF7. Interacts with CSTF2 and SYMPK. The cofactor is Mg(2+). It depends on Mn(2+) as a cofactor. Requires Ni(2+) as cofactor.

It is found in the nucleus. It carries out the reaction a 5'-end dephospho-2'-deoxyribonucleoside-DNA + ATP = a 5'-end 5'-phospho-2'-deoxyribonucleoside-DNA + ADP + H(+). The enzyme catalyses a 5'-end dephospho-ribonucleoside-RNA + ATP = a 5'-end 5'-phospho-ribonucleoside-RNA + ADP + H(+). Polynucleotide kinase that can phosphorylate the 5'-hydroxyl groups of double-stranded RNA (dsRNA), single-stranded RNA (ssRNA), double-stranded DNA (dsDNA) and double-stranded DNA:RNA hybrids. dsRNA is phosphorylated more efficiently than dsDNA, and the RNA component of a DNA:RNA hybrid is phosphorylated more efficiently than the DNA component. Plays a key role in both tRNA splicing and mRNA 3'-end formation. Component of the tRNA splicing endonuclease complex: phosphorylates the 5'-terminus of the tRNA 3'-exon during tRNA splicing; this phosphorylation event is a prerequisite for the subsequent ligation of the two exon halves and the production of a mature tRNA. Its role in tRNA splicing and maturation is required for cerebellar development. Component of the pre-mRNA cleavage complex II (CF-II), which seems to be required for mRNA 3'-end formation. Also phosphorylates the 5'-terminus of exogenously introduced short interfering RNAs (siRNAs), which is a necessary prerequisite for their incorporation into the RNA-induced silencing complex (RISC). However, endogenous siRNAs and microRNAs (miRNAs) that are produced by the cleavage of dsRNA precursors by DICER1 already contain a 5'-phosphate group, so this protein may be dispensible for normal RNA-mediated gene silencing. The chain is Polyribonucleotide 5'-hydroxyl-kinase Clp1 from Homo sapiens (Human).